The chain runs to 263 residues: Thymidylate synthase (263 aa).

DUMP-binding positions include Arg-25 and 123–124 (RR). Cys-143 (nucleophile) is an active-site residue. DUMP-binding positions include 163–166 (RSGD), Asn-174, and 204–206 (HIY). Residue Asp-166 participates in (6R)-5,10-methylene-5,6,7,8-tetrahydrofolate binding. Ser-262 is a binding site for (6R)-5,10-methylene-5,6,7,8-tetrahydrofolate.

It belongs to the thymidylate synthase family. Bacterial-type ThyA subfamily. Homodimer.

Its subcellular location is the cytoplasm. The catalysed reaction is dUMP + (6R)-5,10-methylene-5,6,7,8-tetrahydrofolate = 7,8-dihydrofolate + dTMP. It participates in pyrimidine metabolism; dTTP biosynthesis. Catalyzes the reductive methylation of 2'-deoxyuridine-5'-monophosphate (dUMP) to 2'-deoxythymidine-5'-monophosphate (dTMP) while utilizing 5,10-methylenetetrahydrofolate (mTHF) as the methyl donor and reductant in the reaction, yielding dihydrofolate (DHF) as a by-product. This enzymatic reaction provides an intracellular de novo source of dTMP, an essential precursor for DNA biosynthesis. The sequence is that of Thymidylate synthase from Clostridium beijerinckii (strain ATCC 51743 / NCIMB 8052) (Clostridium acetobutylicum).